The primary structure comprises 220 residues: MNQMNQTIIDAFHFRHATKEFDPTKKISDEDFNTILETGRLSPSSLGLEPWHFVVVQNKELREKLKAYSWGAQKQLDTASHFVLIFARKNVTAHTDYVQHLLRGVKKYEESTIPAVENKFDDFQESFHIADNERTLYDWASKQTYIALANMMTSAALLGIDSCPIEGFDLDKVTEILSDEGVLDTEQFGISVMVGFGYRAQEPKHGKVRQNEDDIISWIE.

This sequence belongs to the nitroreductase family. Requires FMN as cofactor.

This is Putative NAD(P)H nitroreductase SERP2086 from Staphylococcus epidermidis (strain ATCC 35984 / DSM 28319 / BCRC 17069 / CCUG 31568 / BM 3577 / RP62A).